An 801-amino-acid chain; its full sequence is Phenylalanine--tRNA ligase beta subunit (801 aa).

Positions 39–148 (AGSFTGVKVG…EDAVIGTDFR (110 aa)) constitute a tRNA-binding domain. A B5 domain is found at 401 to 476 (PKPNKVALRR…RIYGYDNIPN (76 aa)). Mg(2+)-binding residues include Asp454, Asp460, Glu463, and Glu464. Residues 707–800 (SKFPSNRRDI…VSEKFGAALR (94 aa)) form the FDX-ACB domain.

It belongs to the phenylalanyl-tRNA synthetase beta subunit family. Type 1 subfamily. Tetramer of two alpha and two beta subunits. Requires Mg(2+) as cofactor.

The protein localises to the cytoplasm. It carries out the reaction tRNA(Phe) + L-phenylalanine + ATP = L-phenylalanyl-tRNA(Phe) + AMP + diphosphate + H(+). The sequence is that of Phenylalanine--tRNA ligase beta subunit from Vibrio parahaemolyticus serotype O3:K6 (strain RIMD 2210633).